Here is a 493-residue protein sequence, read N- to C-terminus: MSVHAPAPFAPSAPLRLFNSLTRQLEAFQPVHAGEARVYSCGPTVYNYPHIGNMRAYVFADLLGRTLSFKGLKLTHVINITDVGHLTDDADEGEDKMEKMARAEARSIWDIAKHYTQAYWEDVKALNIRQPARWTIATEYVPQMIAFAERIAAKHCYELDSGLYFDVSTVADYGRLARAQTEEGEGRIEAVEGKRNGADFAIWRKTPPGEKRQMEWDSPWGRGAPGWHLECSVMSGEVLGFPFDIHTGGIDHREIHHPNEIAQNQAFCCTNGLDVPANSGARIWMHNNFLVERSGKMSKSSGEFLRLQLLIDKGYHPLAYRLMCLQAHYRSELEFSWEGLGAALTRLKRMLIAVGQLKERAPEVAAQPGPRFTPFLERFDAAMSDDLNTAVALTVFEEVLGLKKVDPADKLAAVAAMDAVLGLGLLELDRRALRIRPKGVEIDEAGIEALLDARKAARAEKDFARSDALRDQIAAKGVEVMDGDPLGWEWKLA.

Residue Cys-41 participates in Zn(2+) binding. The short motif at 43–53 (PTVYNYPHIGN) is the 'HIGH' region element. Zn(2+)-binding residues include Cys-231, His-256, and Glu-260. The short motif at 296-300 (KMSKS) is the 'KMSKS' region element. Lys-299 contacts ATP.

This sequence belongs to the class-I aminoacyl-tRNA synthetase family. Monomer. Zn(2+) is required as a cofactor.

It is found in the cytoplasm. The catalysed reaction is tRNA(Cys) + L-cysteine + ATP = L-cysteinyl-tRNA(Cys) + AMP + diphosphate. This is Cysteine--tRNA ligase from Novosphingobium aromaticivorans (strain ATCC 700278 / DSM 12444 / CCUG 56034 / CIP 105152 / NBRC 16084 / F199).